We begin with the raw amino-acid sequence, 160 residues long: uncharacterized protein (160 aa).

This is an uncharacterized protein from Magallana gigas (Pacific oyster).